The sequence spans 245 residues: Cuticle protein (245 aa).

The region spanning 25-86 (VSYAAAPALV…TGDSKSQQES (62 aa)) is the Chitin-binding type R&amp;R domain. The tract at residues 79–100 (DSKSQQESRSGDVVQGSYSVVD) is disordered. 3 tandem repeats follow at residues 92–95 (VQGS), 108–111 (VDYT), and 118–121 (FNAV).

Functionally, component of the cuticle of African malaria mosquito. This Anopheles gambiae (African malaria mosquito) protein is Cuticle protein (Ccp84Ab).